A 423-amino-acid chain; its full sequence is Diels-Alderase cheD (423 aa).

A signal peptide spans 1-18 (MKLCALFAGAVISTSAVA). Residues Asn-84 and Asn-132 are each glycosylated (N-linked (GlcNAc...) asparagine).

This sequence belongs to the Diels-Alderase family.

It participates in secondary metabolite biosynthesis. In terms of biological role, diels-Alderase; part of the gene cluster that mediates the biosynthesis of chaetoglobosin A which has a unique inhibitory activity against actin polymerization in mammalian cells. Chaetoglobosin A and its intermediates are involved in the morphological differentiation of C.globosum. The first step of the pathway is the synthesis of prochaetoglobosin I via condensation of one acetyl-CoA, 8 malonyl-CoA, and a L-tryptophan molecule by the PKS-NRPS hybrid synthetase cheA, followed by reduction of backbone double bond to install desired geometry by the enoyl reductase cheB. Further multiple oxidation steps performed by the cytochrome P450 monooxygenases cheE and cheG, as well as by the FAD-linked oxidoreductase cheF, lead to the formation of chaetoglobosin A. Depending on the order of action of these reductases, distinct intermediates can be identified. Within the pathway, the cytochrome P450 monooxygenase cheE catalyzes a stereospecific epoxidation on prochaetoglobosin I, cytoglobosin D, and chaetoglobosin J intermediates. The FAD-linked oxidoreductase cheF performs dehydrogenation of the C-20 hydroxyl groups in the 20-dihyrochaetoglobosin A and cytoglobosin D intermediates. Finally, the cytochrome P450 monooxygenase cheG can catalyze the stereospecific dihydroxylation of prochaetoglobosin I and prochaetoglobosin IV at C-19 and C-20, respectively. The Diels-Alderase cheD may play a role in the post-PKS-NRPS biosynthetic steps catalyzing Diels-Alder cyclization. The sequence is that of Diels-Alderase cheD from Chaetomium globosum (strain ATCC 6205 / CBS 148.51 / DSM 1962 / NBRC 6347 / NRRL 1970) (Soil fungus).